A 606-amino-acid polypeptide reads, in one-letter code: Elongation factor 4 (606 aa).

The tr-type G domain maps to 7–189 (SRIRNFCIIA…AVVDRVPPPK (183 aa)). Residues 19–24 (DHGKST) and 136–139 (NKID) each bind GTP.

It belongs to the TRAFAC class translation factor GTPase superfamily. Classic translation factor GTPase family. LepA subfamily.

It localises to the cell inner membrane. It catalyses the reaction GTP + H2O = GDP + phosphate + H(+). Its function is as follows. Required for accurate and efficient protein synthesis under certain stress conditions. May act as a fidelity factor of the translation reaction, by catalyzing a one-codon backward translocation of tRNAs on improperly translocated ribosomes. Back-translocation proceeds from a post-translocation (POST) complex to a pre-translocation (PRE) complex, thus giving elongation factor G a second chance to translocate the tRNAs correctly. Binds to ribosomes in a GTP-dependent manner. In Parasynechococcus marenigrum (strain WH8102), this protein is Elongation factor 4.